Consider the following 629-residue polypeptide: Ionotropic receptor 75a (629 aa).

Residues 1–335 (MQLVQLANFV…GDVFLQPFSP (335 aa)) lie on the Extracellular side of the membrane. Residues N61, N112, N126, N144, N166, and N232 are each glycosylated (N-linked (GlcNAc...) asparagine). The helical transmembrane segment at 336 to 356 (LVWYLFGGVLSLIGVLLWITF) threads the bilayer. Topologically, residues 357-374 (YMECKRMQKRWRLDYLPS) are cytoplasmic. The chain crosses the membrane as a helical span at residues 375-395 (LLSTFLISFGAACIQSSSLIP). Residues 396-402 (RSAGGRL) are Extracellular-facing. Residues 403 to 423 (IYFALFLISFIMYNYYTSVVV) traverse the membrane as a helical segment. Over 424 to 592 (SSLLSSPVKS…NFVITVGMEY (169 aa)) the chain is Cytoplasmic. The chain crosses the membrane as a helical span at residues 593 to 613 (VAPLLLMLICADILVVVILLV). The Extracellular portion of the chain corresponds to 614-629 (ELAWKRFFTRHLTFHP).

The protein belongs to the glutamate-gated ion channel (TC 1.A.10.1) family. Expressed in acetic-acid-sensing neurons in the antennal coeloconic 2 (ac2) and antennal coeloconic 3 (ac3) sensilla class of sensory hairs (at protein level).

The protein localises to the cell membrane. Its subcellular location is the cell projection. It localises to the dendrite. In terms of biological role, odorant receptor for acetic and propionic acid. Functions as part of an olfactory receptor complex including the ionotropic receptor coreceptor Ir8a. This Drosophila melanogaster (Fruit fly) protein is Ionotropic receptor 75a.